The chain runs to 402 residues: uncharacterized protein (402 aa).

The protein belongs to the peptidase M20 family.

This is an uncharacterized protein from Sinorhizobium fredii (strain NBRC 101917 / NGR234).